Reading from the N-terminus, the 327-residue chain is MRVLGIETSCDETAVAVLDNGKNVVVNFTVSQIEIHQKFGGVVPEVAARHHLKNLPILLKKAFEKVPPETVDVVAATYGPGLIGALLVGLSAAKGLAISLEKPFVGVNHVEAHVQAVFLANPDLKPPLVVLMVSGGHTQLMKVNEDYSMEVLGETLDDSAGEAFDKVARLLGLGYPGGPVIDRVAKKGDPEKYSFPRPMLDDDSYNFSFAGLKTSVLYFLQREKDYKVEDVAASFQKAVVDILVEKTFRLARNLGIRKIAFVGGVAANSMLREEVRKRAERWNYEVFFPPLELCTDNALMVAKAGYEKAKRGMFSPLNLNADPNLNV.

The Fe cation site is built by His-109 and His-113. Residues 132–136 (MVSGG), Asp-165, Gly-178, Asp-182, and Asn-268 each bind substrate. Asp-296 contacts Fe cation.

It belongs to the KAE1 / TsaD family. It depends on Fe(2+) as a cofactor.

Its subcellular location is the cytoplasm. It catalyses the reaction L-threonylcarbamoyladenylate + adenosine(37) in tRNA = N(6)-L-threonylcarbamoyladenosine(37) in tRNA + AMP + H(+). In terms of biological role, required for the formation of a threonylcarbamoyl group on adenosine at position 37 (t(6)A37) in tRNAs that read codons beginning with adenine. Is involved in the transfer of the threonylcarbamoyl moiety of threonylcarbamoyl-AMP (TC-AMP) to the N6 group of A37, together with TsaE and TsaB. TsaD likely plays a direct catalytic role in this reaction. The polypeptide is tRNA N6-adenosine threonylcarbamoyltransferase (Thermotoga petrophila (strain ATCC BAA-488 / DSM 13995 / JCM 10881 / RKU-1)).